Consider the following 162-residue polypeptide: E3 ubiquitin-protein ligase LAP (162 aa).

Topologically, residues 1–78 (MEGSDNTNTH…RWKCSFMYCN (78 aa)) are cytoplasmic. The segment at 3-61 (GSDNTNTHCWICKDEYNVSTNFCNCKNEFKIVHKNCLEEWINFSHNTKCKICNGKYNIK) adopts an RING-CH-type zinc-finger fold. Residues Cys11, Cys14, Cys25, Cys27, His35, Cys38, Cys51, and Cys54 each contribute to the Zn(2+) site. A helical transmembrane segment spans residues 79–99 (VPAICVSLICLLLLPLTILLV). At 100 to 121 (KFNLKSMLENIENRDLIALISA) the chain is on the lumenal side. The chain crosses the membrane as a helical span at residues 122–142 (MAYSLPCVVGFITVVHILIAL). Residues 143–162 (YDYYLAAKSDNTTYQVYEYI) lie on the Cytoplasmic side of the membrane.

The protein belongs to the poxviridae LAP protein family.

Its subcellular location is the host membrane. The protein resides in the host Golgi apparatus. It localises to the host trans-Golgi network membrane. The protein localises to the host early endosome membrane. It carries out the reaction S-ubiquitinyl-[E2 ubiquitin-conjugating enzyme]-L-cysteine + [acceptor protein]-L-lysine = [E2 ubiquitin-conjugating enzyme]-L-cysteine + N(6)-ubiquitinyl-[acceptor protein]-L-lysine.. Its function is as follows. E3 ubiquitin-protein ligase which promotes ubiquitination and subsequent degradation of host MHC-I and CD4 molecules, presumably to prevent lysis of infected cells by cytotoxic T-lymphocytes and NK cell. Binds target molecules through transmembrane interaction. The result of this ubiquitination is the enhancement of the endocytosis of the target chain and the delivery to the lysosome, where it is proteolytically destroyed. This chain is E3 ubiquitin-protein ligase LAP (LW010), found in Lumpy skin disease virus (LSDV).